The chain runs to 270 residues: Endonuclease 4 (270 aa).

Zn(2+) contacts are provided by histidine 69, histidine 108, glutamate 139, aspartate 169, histidine 172, histidine 204, aspartate 217, histidine 219, and glutamate 248.

This sequence belongs to the AP endonuclease 2 family. It depends on Zn(2+) as a cofactor.

It catalyses the reaction Endonucleolytic cleavage to 5'-phosphooligonucleotide end-products.. Its function is as follows. Endonuclease IV plays a role in DNA repair. It cleaves phosphodiester bonds at apurinic or apyrimidinic (AP) sites, generating a 3'-hydroxyl group and a 5'-terminal sugar phosphate. In addition, possesses a 3'-5' exonuclease activity. The polypeptide is Endonuclease 4 (Thermus thermophilus (strain ATCC BAA-163 / DSM 7039 / HB27)).